The sequence spans 73 residues: DNA-directed RNA polymerase subunit epsilon (73 aa).

Belongs to the RNA polymerase subunit epsilon family. In terms of assembly, RNAP is composed of a core of 2 alpha, a beta and a beta' subunit. The core is associated with a delta subunit, and at least one of epsilon or omega. When a sigma factor is associated with the core the holoenzyme is formed, which can initiate transcription.

The catalysed reaction is RNA(n) + a ribonucleoside 5'-triphosphate = RNA(n+1) + diphosphate. Its function is as follows. A non-essential component of RNA polymerase (RNAP). The protein is DNA-directed RNA polymerase subunit epsilon of Lactobacillus acidophilus (strain ATCC 700396 / NCK56 / N2 / NCFM).